Reading from the N-terminus, the 438-residue chain is Protein translocase subunit SecY (438 aa).

A helical transmembrane segment spans residues 1–43 (MKIKPILELIPEVKRPLKGVSFKEKIQWTGLVLILYFILGTID). At 44-54 (IYMGGAEMPAM) the chain is on the extracellular side. The segment at residues 55-62 (FAFWQTVT) is an intramembrane region (helical). Residues 55–83 (FAFWQTVTASKMGTLITLGIGPIVTAGII) form a discontinuously helical membrane-spanning segment. Residues 63–74 (ASKMGTLITLGI) lie within the membrane without spanning it. The segment at residues 75 to 83 (GPIVTAGII) is an intramembrane region (helical). Over 84 to 104 (MQLLVGSELISLDLSKPMNRA) the chain is Cytoplasmic. Residues 105 to 129 (LFQGLQKLFGIFLCFLEAVMFVGAG) form a helical membrane-spanning segment. Residues 130 to 136 (AFGVVNS) lie on the Extracellular side of the membrane. The helical transmembrane segment at 137–161 (TLALILVLQLALGAILVIYLDEIVS) threads the bilayer. The Cytoplasmic segment spans residues 162-167 (RYGIGS). Residues 168–186 (GIGLFIAAGVAQTIFVGAF) traverse the membrane as a helical segment. Residues 187-209 (GAEGYLWKFFSAMSVGSLGIAFE) lie on the Extracellular side of the membrane. Residues 210–231 (YILPILSTLFVFLVVVYVESIR) traverse the membrane as a helical segment. Topologically, residues 232 to 256 (VEIPLAHGRVKGAVGKYPIKFIYVS) are cytoplasmic. A helical membrane pass occupies residues 257-278 (NLPVILAAALFANIQLWGMFLD). Residues 279 to 315 (RMGYPILGQYSNGTAVSGIAYYFSTPYGISNIISDPL) are Extracellular-facing. Residues 316–335 (HAIFYTLMMVIFCILFGLFW) traverse the membrane as a helical segment. Over 336–378 (VETSGLDAKSMAKKLGNLDMAIKGFRKSQKSIEQRLKRYIKPI) the chain is Cytoplasmic. Residues 379–397 (TVMGSAFVGFLAAAADFTG) form a helical membrane-spanning segment. Residues 398–400 (ALG) lie on the Extracellular side of the membrane. A helical membrane pass occupies residues 401-415 (GGTGVLLTVSIVYRL). The Cytoplasmic portion of the chain corresponds to 416 to 438 (YEQLVQEQLSELHPAVAKFVGKR).

This sequence belongs to the SecY/SEC61-alpha family. As to quaternary structure, component of the Sec protein translocase complex. Heterotrimer consisting of alpha (SecY), beta (SecG) and gamma (SecE) subunits. The heterotrimers can form oligomers, although 1 heterotrimer is thought to be able to translocate proteins. Interacts with the ribosome. May interact with SecDF, and other proteins may be involved.

Its subcellular location is the cell membrane. The central subunit of the protein translocation channel SecYEG. Consists of two halves formed by TMs 1-5 and 6-10. These two domains form a lateral gate at the front which open onto the bilayer between TMs 2 and 7, and are clamped together by SecE at the back. The channel is closed by both a pore ring composed of hydrophobic SecY resides and a short helix (helix 2A) on the extracellular side of the membrane which forms a plug. The plug probably moves laterally to allow the channel to open. The ring and the pore may move independently. The sequence is that of Protein translocase subunit SecY from Methanococcus vannielii.